The following is a 395-amino-acid chain: Imidazolonepropionase (395 aa).

The Fe(3+) site is built by histidine 63 and histidine 65. Zn(2+) contacts are provided by histidine 63 and histidine 65. 3 residues coordinate 4-imidazolone-5-propanoate: arginine 72, tyrosine 135, and histidine 168. Tyrosine 135 contacts N-formimidoyl-L-glutamate. Residue histidine 233 participates in Fe(3+) binding. Residue histidine 233 participates in Zn(2+) binding. Glutamine 236 is a 4-imidazolone-5-propanoate binding site. A Fe(3+)-binding site is contributed by aspartate 308. Position 308 (aspartate 308) interacts with Zn(2+). Positions 310 and 312 each coordinate N-formimidoyl-L-glutamate. Threonine 313 provides a ligand contact to 4-imidazolone-5-propanoate.

This sequence belongs to the metallo-dependent hydrolases superfamily. HutI family. Zn(2+) serves as cofactor. The cofactor is Fe(3+).

It is found in the cytoplasm. It catalyses the reaction 4-imidazolone-5-propanoate + H2O = N-formimidoyl-L-glutamate. Its pathway is amino-acid degradation; L-histidine degradation into L-glutamate; N-formimidoyl-L-glutamate from L-histidine: step 3/3. Its function is as follows. Catalyzes the hydrolytic cleavage of the carbon-nitrogen bond in imidazolone-5-propanoate to yield N-formimidoyl-L-glutamate. It is the third step in the universal histidine degradation pathway. In Cereibacter sphaeroides (strain ATCC 17023 / DSM 158 / JCM 6121 / CCUG 31486 / LMG 2827 / NBRC 12203 / NCIMB 8253 / ATH 2.4.1.) (Rhodobacter sphaeroides), this protein is Imidazolonepropionase.